Here is a 162-residue protein sequence, read N- to C-terminus: MRILKPYLRSTSIQCYLCLLLNSHFLTEAGIHVFILGCISASLPKTEANWQYVINDLKTIEHLIQSIHMDATLYTESDAHPNCKVTAMQCFLLELRVILHESKNATIYEIIENLTMLANSNLSSIENKTELGCKECEELEEKSIKEFLKSFVHIVQMFINTS.

Positions 1-29 are cleaved as a signal peptide; that stretch reads MRILKPYLRSTSIQCYLCLLLNSHFLTEA. Positions 30–48 are excised as a propeptide; that stretch reads GIHVFILGCISASLPKTEA. Cystine bridges form between cysteine 83/cysteine 133 and cysteine 90/cysteine 136. N-linked (GlcNAc...) asparagine glycosylation is found at asparagine 104, asparagine 113, asparagine 121, and asparagine 127.

This sequence belongs to the IL-15/IL-21 family.

The protein resides in the secreted. Its function is as follows. Cytokine that plays a major role in the development of inflammatory and protective immune responses to microbial invaders and parasites by modulating immune cells of both the innate and adaptive immune systems. Stimulates the proliferation of natural killer cells, T-cells and B-cells and promotes the secretion of several cytokines. In monocytes, induces the production of IL8 and monocyte chemotactic protein 1/CCL2, two chemokines that attract neutrophils and monocytes respectively to sites of infection. Unlike most cytokines, which are secreted in soluble form, IL15 is expressed in association with its high affinity IL15RA on the surface of IL15-producing cells and delivers signals to target cells that express IL2RB and IL2RG receptor subunits. Binding to its receptor triggers the phosphorylation of JAK1 and JAK3 and the recruitment and subsequent phosphorylation of signal transducer and activator of transcription-3/STAT3 and STAT5. In mast cells, induces the rapid tyrosine phosphorylation of STAT6 and thereby controls mast cell survival and release of cytokines such as IL4. This chain is Interleukin-15 (IL15), found in Bos taurus (Bovine).